An 895-amino-acid chain; its full sequence is uncharacterized protein (895 aa).

The interval 257–283 (KSHKYPPGPPDNSSSNTSGQQNTSNTS) is disordered. Residues 268-283 (NSSSNTSGQQNTSNTS) show a composition bias toward low complexity.

This is an uncharacterized protein from Acanthamoeba polyphaga mimivirus (APMV).